The primary structure comprises 301 residues: Mitochondrial ornithine transporter 1 (301 aa).

6 helical membrane-spanning segments follow: residues 5–25, 68–88, 110–130, 168–188, 207–227, and 237–257; these read PAIQAAIDLTAGAAGGTACVL, SPALIANIAENSVLFMCYGFC, AAAGSFASAFAALVLCPTELV, GFYHGLSSTLLREVPGYFFFF, LGPVPLMLSGGFGGICLWLAV, and IQVLSMTGKQTGLVRTFLSIV. 3 Solcar repeats span residues 7–91, 104–197, and 207–293; these read IQAA…CQQV, LSDL…SRSF, and LGPV…SRKL.

Belongs to the mitochondrial carrier (TC 2.A.29) family. Widely expressed, with highest levels in the liver, testis and kidney. In the brain, expressed at high levels in the hypothalamus.

It localises to the mitochondrion inner membrane. The protein resides in the mitochondrion membrane. It catalyses the reaction L-citrulline(in) + L-ornithine(out) + H(+)(in) = L-citrulline(out) + L-ornithine(in) + H(+)(out). The enzyme catalyses L-ornithine(in) + L-arginine(out) = L-ornithine(out) + L-arginine(in). The catalysed reaction is L-ornithine(out) + L-lysine(in) = L-ornithine(in) + L-lysine(out). It carries out the reaction L-lysine(out) + H(+)(in) = L-lysine(in) + H(+)(out). It catalyses the reaction L-ornithine(out) + H(+)(in) = L-ornithine(in) + H(+)(out). Its activity is regulated as follows. Inhibited by pyridoxal 5'-phosphate as well as by mercurials (mersalyl, p-chloromercuribenzene sulfonate, and mercuric chloride), N-ethylmaleimide and spermine. Its function is as follows. Mitochondrial ornithine-citrulline antiporter. Catalyzes the exchange between cytosolic ornithine and mitochondrial citrulline plus an H(+), the proton compensates the positive charge of ornithine thus leading to an electroneutral transport. Plays a crucial role in the urea cycle, by connecting the cytosolic and the intramitochondrial reactions of the urea cycle. Lysine and arginine are also transported by the antiport mechanism. In addition, catalyzes an electroneutral exchange of ornithine or lysine for H(+), a reaction driven by the pH gradient across the inner membrane. This chain is Mitochondrial ornithine transporter 1, found in Mus musculus (Mouse).